The primary structure comprises 211 residues: tRNA (pseudouridine(54)-N(1))-methyltransferase (211 aa).

3 residues coordinate S-adenosyl-L-methionine: leucine 128, glycine 150, and cysteine 183.

This sequence belongs to the methyltransferase superfamily. TrmY family. Homodimer.

It is found in the cytoplasm. The catalysed reaction is pseudouridine(54) in tRNA + S-adenosyl-L-methionine = N(1)-methylpseudouridine(54) in tRNA + S-adenosyl-L-homocysteine + H(+). In terms of biological role, specifically catalyzes the N1-methylation of pseudouridine at position 54 (Psi54) in tRNAs. The sequence is that of tRNA (pseudouridine(54)-N(1))-methyltransferase from Methanosarcina acetivorans (strain ATCC 35395 / DSM 2834 / JCM 12185 / C2A).